The chain runs to 270 residues: 3-methyl-2-oxobutanoate hydroxymethyltransferase (270 aa).

Mg(2+) contacts are provided by D53 and D92. Residues 53-54 (DS), D92, and K120 each bind 3-methyl-2-oxobutanoate. E122 is a Mg(2+) binding site. E189 acts as the Proton acceptor in catalysis.

Belongs to the PanB family. As to quaternary structure, homodecamer; pentamer of dimers. Requires Mg(2+) as cofactor.

It localises to the cytoplasm. The catalysed reaction is 3-methyl-2-oxobutanoate + (6R)-5,10-methylene-5,6,7,8-tetrahydrofolate + H2O = 2-dehydropantoate + (6S)-5,6,7,8-tetrahydrofolate. It participates in cofactor biosynthesis; (R)-pantothenate biosynthesis; (R)-pantoate from 3-methyl-2-oxobutanoate: step 1/2. In terms of biological role, catalyzes the reversible reaction in which hydroxymethyl group from 5,10-methylenetetrahydrofolate is transferred onto alpha-ketoisovalerate to form ketopantoate. The protein is 3-methyl-2-oxobutanoate hydroxymethyltransferase of Saccharophagus degradans (strain 2-40 / ATCC 43961 / DSM 17024).